We begin with the raw amino-acid sequence, 485 residues long: N-succinylglutamate 5-semialdehyde dehydrogenase (485 aa).

Residue 220–225 (GSANTG) participates in NAD(+) binding. Active-site residues include Glu-243 and Cys-278.

The protein belongs to the aldehyde dehydrogenase family. AstD subfamily.

The catalysed reaction is N-succinyl-L-glutamate 5-semialdehyde + NAD(+) + H2O = N-succinyl-L-glutamate + NADH + 2 H(+). Its pathway is amino-acid degradation; L-arginine degradation via AST pathway; L-glutamate and succinate from L-arginine: step 4/5. Its function is as follows. Catalyzes the NAD-dependent reduction of succinylglutamate semialdehyde into succinylglutamate. The chain is N-succinylglutamate 5-semialdehyde dehydrogenase from Vibrio atlanticus (strain LGP32) (Vibrio splendidus (strain Mel32)).